Here is a 521-residue protein sequence, read N- to C-terminus: NAD(P)H-quinone oxidoreductase subunit 2 (521 aa).

Transmembrane regions (helical) follow at residues 14 to 34, 42 to 62, 79 to 99, 109 to 129, 132 to 152, 167 to 187, 207 to 227, 241 to 261, 275 to 295, 303 to 323, 331 to 351, 375 to 395, 397 to 417, and 463 to 483; these read VILP…TDLI, LTPA…TLQW, LSIV…LLSI, LGEF…LSGA, LVTI…LTGY, LLIG…LYGL, LALL…ISAV, PTPI…ALAI, WHFV…VVAL, LLAY…IAGT, VYYL…VILF, LGLS…GFFG, LYLF…LALI, and AGLV…NPLF.

The protein belongs to the complex I subunit 2 family. NDH-1 can be composed of about 15 different subunits; different subcomplexes with different compositions have been identified which probably have different functions.

It localises to the cellular thylakoid membrane. The enzyme catalyses a plastoquinone + NADH + (n+1) H(+)(in) = a plastoquinol + NAD(+) + n H(+)(out). It catalyses the reaction a plastoquinone + NADPH + (n+1) H(+)(in) = a plastoquinol + NADP(+) + n H(+)(out). Functionally, NDH-1 shuttles electrons from an unknown electron donor, via FMN and iron-sulfur (Fe-S) centers, to quinones in the respiratory and/or the photosynthetic chain. The immediate electron acceptor for the enzyme in this species is believed to be plastoquinone. Couples the redox reaction to proton translocation, and thus conserves the redox energy in a proton gradient. Cyanobacterial NDH-1 also plays a role in inorganic carbon-concentration. This chain is NAD(P)H-quinone oxidoreductase subunit 2, found in Synechococcus elongatus (strain ATCC 33912 / PCC 7942 / FACHB-805) (Anacystis nidulans R2).